Here is a 300-residue protein sequence, read N- to C-terminus: Cell adhesion molecule CEACAM19 (300 aa).

The N-terminal stretch at 1–32 is a signal peptide; the sequence is MEIPMGTQGCFSKSLLLSASILVLWMLQGSQA. The Extracellular segment spans residues 33–157; it reads ALYIQKIPEQ…PSTHLPTNAG (125 aa). N-linked (GlcNAc...) asparagine glycosylation occurs at N104. A helical membrane pass occupies residues 158-178; the sequence is ILAATIIGSLAAGALLISCIA. Over 179-300 the chain is Cytoplasmic; the sequence is YLLVTRNWRG…APYCQLVPTS (122 aa). The segment at 259 to 291 is disordered; sequence SINPARPLPTPPHLQAEPENHQYQQDLLNPDPA.

It belongs to the immunoglobulin superfamily. CEA family. As to expression, ubiquitous with highest expression in prostate, uterus, fetal brain, mammary gland, adrenal gland, skeletal muscle, small intestine, and kidney, and lower expression in lung, cerebellum, testis, liver, pancreas, bone marrow and ovary.

Its subcellular location is the membrane. The polypeptide is Cell adhesion molecule CEACAM19 (Homo sapiens (Human)).